Reading from the N-terminus, the 104-residue chain is MSTYAIIKTGGKQVKVEVGQAIYVEKLNAEAGQDVTFDEVVLVGGENTVVGTPLVAGASVVGTVEKQGKQKKVVTYKYKPKKGSHRKQGHRQPYTKVVINAINA.

The protein belongs to the bacterial ribosomal protein bL21 family. Part of the 50S ribosomal subunit. Contacts protein L20.

Its function is as follows. This protein binds to 23S rRNA in the presence of protein L20. The polypeptide is Large ribosomal subunit protein bL21 (Streptococcus sanguinis (strain SK36)).